The chain runs to 354 residues: Glutamine synthetase (354 aa).

Residues 22–101 (IQAEYVWVDG…VLAETYNSDG (80 aa)) form the GS beta-grasp domain. Residues 108 to 354 (FRHHAAKVME…IIVETTLLNA (247 aa)) form the GS catalytic domain.

This sequence belongs to the glutamine synthetase family. As to quaternary structure, homooctamer.

Its subcellular location is the cytoplasm. It carries out the reaction L-glutamate + NH4(+) + ATP = L-glutamine + ADP + phosphate + H(+). The polypeptide is Glutamine synthetase (GLN1) (Hebeloma cylindrosporum).